A 314-amino-acid polypeptide reads, in one-letter code: MAFLENGNHTAVSEFILLGLTDDPVLRIVLFTIILCIYLVTVSGNLSTILLIRVSSQLHHPMYFFLSHLASADIGLSSSVTPNMLVNFLVERSTISYLGCGIQLSSAALFGATECFLLAAMAYDRFMAICNPLLYSTKMSTKVCVQLIVGSYIAGFLNASSFLLSFFSLLFCGQNIINDFFCDFAPLAELSCSDVSVFVVVISFSAGTVTMLTVFVIAISYSYILITILKMRSTEGRQKAFSTCTSHLTAVTLFYGTVTFIYVMPKSSYSMDQNKIISVFYMVVVPMLNPLIYSLRNNEIKGALKRHFDRKTFS.

The Extracellular portion of the chain corresponds to 1–28 (MAFLENGNHTAVSEFILLGLTDDPVLRI). N-linked (GlcNAc...) asparagine glycosylation occurs at Asn8. The helical transmembrane segment at 29–49 (VLFTIILCIYLVTVSGNLSTI) threads the bilayer. Topologically, residues 50 to 57 (LLIRVSSQ) are cytoplasmic. The chain crosses the membrane as a helical span at residues 58-78 (LHHPMYFFLSHLASADIGLSS). Over 79–102 (SVTPNMLVNFLVERSTISYLGCGI) the chain is Extracellular. Cysteines 100 and 192 form a disulfide. A helical transmembrane segment spans residues 103-123 (QLSSAALFGATECFLLAAMAY). Residues 124 to 136 (DRFMAICNPLLYS) lie on the Cytoplasmic side of the membrane. The helical transmembrane segment at 137 to 157 (TKMSTKVCVQLIVGSYIAGFL) threads the bilayer. Residues 158–199 (NASSFLLSFFSLLFCGQNIINDFFCDFAPLAELSCSDVSVFV) lie on the Extracellular side of the membrane. A helical membrane pass occupies residues 200–220 (VVISFSAGTVTMLTVFVIAIS). Residues 221 to 240 (YSYILITILKMRSTEGRQKA) lie on the Cytoplasmic side of the membrane. The chain crosses the membrane as a helical span at residues 241–261 (FSTCTSHLTAVTLFYGTVTFI). Topologically, residues 262-274 (YVMPKSSYSMDQN) are extracellular. A helical transmembrane segment spans residues 275 to 295 (KIISVFYMVVVPMLNPLIYSL). At 296-314 (RNNEIKGALKRHFDRKTFS) the chain is on the cytoplasmic side.

It belongs to the G-protein coupled receptor 1 family.

It localises to the cell membrane. Potential odorant receptor. The polypeptide is Olfactory receptor 5P66 (Mus musculus (Mouse)).